The sequence spans 162 residues: Protein-export protein SecB (162 aa).

This sequence belongs to the SecB family. In terms of assembly, homotetramer, a dimer of dimers. One homotetramer interacts with 1 SecA dimer.

The protein localises to the cytoplasm. Functionally, one of the proteins required for the normal export of preproteins out of the cell cytoplasm. It is a molecular chaperone that binds to a subset of precursor proteins, maintaining them in a translocation-competent state. It also specifically binds to its receptor SecA. This Hamiltonella defensa subsp. Acyrthosiphon pisum (strain 5AT) protein is Protein-export protein SecB.